Here is a 110-residue protein sequence, read N- to C-terminus: Phosphoribosyl-ATP pyrophosphatase (110 aa).

The protein belongs to the PRA-PH family.

The protein resides in the cytoplasm. The enzyme catalyses 1-(5-phospho-beta-D-ribosyl)-ATP + H2O = 1-(5-phospho-beta-D-ribosyl)-5'-AMP + diphosphate + H(+). The protein operates within amino-acid biosynthesis; L-histidine biosynthesis; L-histidine from 5-phospho-alpha-D-ribose 1-diphosphate: step 2/9. This chain is Phosphoribosyl-ATP pyrophosphatase, found in Lacticaseibacillus casei (strain BL23) (Lactobacillus casei).